Consider the following 535-residue polypeptide: Interferon lambda receptor 1 (535 aa).

A signal peptide spans 1 to 20; the sequence is MWRADRWAPLLLFLLQSALG. At 21-227 the chain is on the extracellular side; sequence RPRLAPPRNV…FLEAPGDKRA (207 aa). Residues 26-121 form the Fibronectin type-III domain; that stretch reads PPRNVTLFSQ…ESRYLEYLFD (96 aa). N-linked (GlcNAc...) asparagine glycans are attached at residues Asn-29, Asn-36, and Asn-52. Disulfide bonds link Cys-73–Cys-81, Cys-85–Cys-149, and Cys-194–Cys-216. Asn-141 carries an N-linked (GlcNAc...) asparagine glycan. Residues 228-248 form a helical membrane-spanning segment; sequence VLAMPSLLLLLIAAVAAGVAW. Over 249–535 the chain is Cytoplasmic; the sequence is KIMKGNPWFQ…GRMLGDYLVR (287 aa). Disordered stretches follow at residues 301 to 419 and 478 to 520; these read NRPA…APCG and VNNP…SSVQ. The span at 321–336 shows a compositional bias: acidic residues; that stretch reads STEDEDEDTDYDDDGD. Over residues 350-360 the composition is skewed to basic and acidic residues; it reads EKPRVMEHSET. Positions 376-396 are enriched in low complexity; the sequence is GSDGSSAWDSSDRSWSSTGDS. Positions 397–414 are enriched in basic and acidic residues; sequence SYKDEVGSSSCLDRKEPD. Over residues 482–503 the composition is skewed to acidic residues; the sequence is EGEEEQEDEEEEEEEEEEEDWE.

The protein belongs to the type II cytokine receptor family. In terms of assembly, heterodimer with IL10RB. Post-translationally, ubiquitinated by FBXO45-containing E3 ligase leading to proteasomal degradation.

It is found in the membrane. The IFNLR1/IL10RB dimer is a receptor for the cytokine ligands IFNL2 and IFNL3 and mediates their antiviral activity. The ligand/receptor complex stimulate the activation of the JAK/STAT signaling pathway leading to the expression of IFN-stimulated genes (ISG), which contribute to the antiviral state. Determines the cell type specificity of the lambda interferon action. Shows a more restricted pattern of expression in the epithelial tissues thereby limiting responses to lambda interferons primarily to epithelial cells of the respiratory, gastrointestinal, and reproductive tracts. Seems not to be essential for early virus-activated host defense in vaginal infection, but plays an important role in Toll-like receptor (TLR)-induced antiviral defense. Plays a significant role in the antiviral immune defense in the intestinal epithelium. In Mus musculus (Mouse), this protein is Interferon lambda receptor 1 (Ifnlr1).